Here is a 242-residue protein sequence, read N- to C-terminus: uncharacterized protein (242 aa).

3 residues coordinate S-adenosyl-L-methionine: glycine 198, isoleucine 218, and leucine 227.

The protein belongs to the class IV-like SAM-binding methyltransferase superfamily. RNA methyltransferase TrmH family.

This is an uncharacterized protein from Mycoplasma genitalium (strain ATCC 33530 / DSM 19775 / NCTC 10195 / G37) (Mycoplasmoides genitalium).